A 206-amino-acid chain; its full sequence is dITP/XTP pyrophosphatase (206 aa).

10–15 (SGNAGK) lines the substrate pocket. Positions 40 and 69 each coordinate Mg(2+). Asp-69 acts as the Proton acceptor in catalysis. Substrate contacts are provided by residues Ser-70, 148–151 (FGYD), Lys-171, and 176–177 (HR).

Belongs to the HAM1 NTPase family. In terms of assembly, homodimer. Requires Mg(2+) as cofactor.

It carries out the reaction XTP + H2O = XMP + diphosphate + H(+). The catalysed reaction is dITP + H2O = dIMP + diphosphate + H(+). It catalyses the reaction ITP + H2O = IMP + diphosphate + H(+). Functionally, pyrophosphatase that catalyzes the hydrolysis of nucleoside triphosphates to their monophosphate derivatives, with a high preference for the non-canonical purine nucleotides XTP (xanthosine triphosphate), dITP (deoxyinosine triphosphate) and ITP. Seems to function as a house-cleaning enzyme that removes non-canonical purine nucleotides from the nucleotide pool, thus preventing their incorporation into DNA/RNA and avoiding chromosomal lesions. This Synechococcus sp. (strain CC9311) protein is dITP/XTP pyrophosphatase.